A 518-amino-acid chain; its full sequence is Transcription factor TT8 (518 aa).

2 coiled-coil regions span residues 220 to 240 and 405 to 428; these read EVHE…MSEE and VNHL…KRTR. The bHLH domain maps to 359 to 408; it reads REDLSHVVAERRRREKLNEKFITLRSMVPFVTKMDKVSILGDTIAYVNHL.

It belongs to the bHLH protein family. As to quaternary structure, homodimer. Interacts with MYB4, MYB5, MYB6, MYB82, MYB113, MYB114, MYB75/PAP1, MYB90/PAP2, and TT2. In terms of tissue distribution, buds, flowers and developing siliques, but not in leaves, stems and roots.

The protein localises to the nucleus. Functionally, transcription activator, when associated with MYB75/PAP1 or MYB90/PAP2. Involved in the control of flavonoid pigmentation. Plays a key role in regulating leucoanthocyanidin reductase (BANYULS) and dihydroflavonol-4-reductase (DFR). Not required for leucoanthocyanidin dioxygenase (LDOX) expression. This Arabidopsis thaliana (Mouse-ear cress) protein is Transcription factor TT8.